We begin with the raw amino-acid sequence, 565 residues long: Sulfite reductase [NADPH] hemoprotein beta-component (565 aa).

C429, C435, C474, and C478 together coordinate [4Fe-4S] cluster. C478 is a siroheme binding site.

It belongs to the nitrite and sulfite reductase 4Fe-4S domain family. In terms of assembly, alpha(8)-beta(8). The alpha component is a flavoprotein, the beta component is a hemoprotein. It depends on siroheme as a cofactor. [4Fe-4S] cluster serves as cofactor.

The enzyme catalyses hydrogen sulfide + 3 NADP(+) + 3 H2O = sulfite + 3 NADPH + 4 H(+). Its pathway is sulfur metabolism; hydrogen sulfide biosynthesis; hydrogen sulfide from sulfite (NADPH route): step 1/1. Component of the sulfite reductase complex that catalyzes the 6-electron reduction of sulfite to sulfide. This is one of several activities required for the biosynthesis of L-cysteine from sulfate. The chain is Sulfite reductase [NADPH] hemoprotein beta-component from Pseudoalteromonas translucida (strain TAC 125).